The following is a 369-amino-acid chain: MPQTSTTQFFYLSALGIWGLWVYAFFNGMFDRLDTITRTLHFPDGRPLRSKYTNIGPLDAQLTLLSAFYDVLSNTLTSGPRLLFFDVNYVVACANLWVLIESRRRGVRSWFLKYPAWAMVLCNANGAAIVLPLYLYLVCCSKARLRDASVPKHEATALLVSTVVILLQPLLIFVPAWAGRGGSHLHHGCIALFQVAPIGVSVFHLGLASILPREASDSSPSSRKDSKKCIVASLVLAGTVAAAVHSYTVVGALITRDGQASLTRLFVPAHGFSDPIEVPLQPSGLPAEYMALVENLHLFSQWDWIVVALTSVLYSHLLLSLRDGAVRAKANHWVSPVEAQELVYLTVATIILGPGGAASFALAIRESRI.

8 consecutive transmembrane segments (helical) span residues F9–M29, L82–S102, A118–V138, A157–W177, I190–I210, L234–I254, L298–L318, and L342–L362.

It belongs to the membrane-bound ascI terpene cyclase family.

The protein localises to the membrane. It participates in polyketide biosynthesis. Its function is as follows. Part of the gene cluster that mediates the biosynthesis of depudecin, a highly oxidized eleven-carbon linear polyketide that acts as a histone deacetylase (HDAC) inhibitor and makes a small contribution to pathogenesis. The reducing polyketide synthase DEP5 is the central enzyme in depudecin biosynthesis by yielding the backbone polyketide chain. The monooxygenases DEP2 and DEP4, as well as the uncharacterized protein DEP1, then act as tailoring enzymes to modify the intermediate polyketide chain into depudecin. The protein is Terpene cyclase DEP1 of Alternaria brassicicola (Dark leaf spot agent).